A 568-amino-acid polypeptide reads, in one-letter code: Protein OCTOPUS-like (568 aa).

Disordered regions lie at residues 1–27 (MNLS…RLST), 78–99 (LFKP…RPGF), 168–203 (EEAE…ELKP), 242–276 (QKQK…PRFS), 360–428 (PGGS…DKKS), 446–512 (DDEE…SKDG), and 526–558 (RSWK…SHGH). Over residues 82–93 (SSSGTNNSNGNG) the composition is skewed to low complexity. Over residues 168–179 (EEAEIEEDEENG) the composition is skewed to acidic residues. A compositionally biased stretch (basic and acidic residues) spans 180–193 (EKDPGEIVEEKSSE). Serine 260 carries the phosphoserine modification. Residues 400 to 423 (SVSNSTTTIDSNSMETAENKGNQN) are compositionally biased toward polar residues. The span at 532–546 (GGSGGGGGGGGGGGW) shows a compositional bias: gly residues.

This sequence belongs to the OCTOPUS family. In terms of processing, phosphorylation at Ser-260 amplifies the promotion of protophloem differentiation.

It localises to the cell membrane. Its subcellular location is the cytoplasm. Functionally, potentiates primary root protophloem differentiation. Regulates roots architecture. The protein is Protein OCTOPUS-like of Arabidopsis thaliana (Mouse-ear cress).